Here is a 159-residue protein sequence, read N- to C-terminus: Phosphopantetheine adenylyltransferase (159 aa).

Threonine 10 contacts substrate. ATP is bound by residues 10 to 11 (TF) and histidine 18. Substrate-binding residues include lysine 42, leucine 74, and arginine 88. ATP-binding positions include 89 to 91 (GLR), glutamate 99, and 124 to 130 (NSFISST).

It belongs to the bacterial CoaD family. In terms of assembly, homohexamer. Mg(2+) serves as cofactor.

The protein resides in the cytoplasm. It carries out the reaction (R)-4'-phosphopantetheine + ATP + H(+) = 3'-dephospho-CoA + diphosphate. Its pathway is cofactor biosynthesis; coenzyme A biosynthesis; CoA from (R)-pantothenate: step 4/5. Reversibly transfers an adenylyl group from ATP to 4'-phosphopantetheine, yielding dephospho-CoA (dPCoA) and pyrophosphate. The sequence is that of Phosphopantetheine adenylyltransferase from Shewanella pealeana (strain ATCC 700345 / ANG-SQ1).